A 308-amino-acid chain; its full sequence is 4-hydroxy-3-methylbut-2-enyl diphosphate reductase (308 aa).

Residue Cys12 participates in [4Fe-4S] cluster binding. His41 and His74 together coordinate (2E)-4-hydroxy-3-methylbut-2-enyl diphosphate. Dimethylallyl diphosphate-binding residues include His41 and His74. Isopentenyl diphosphate contacts are provided by His41 and His74. Residue Cys96 participates in [4Fe-4S] cluster binding. His124 is a binding site for (2E)-4-hydroxy-3-methylbut-2-enyl diphosphate. His124 is a dimethylallyl diphosphate binding site. Position 124 (His124) interacts with isopentenyl diphosphate. The Proton donor role is filled by Glu126. Residue Thr166 coordinates (2E)-4-hydroxy-3-methylbut-2-enyl diphosphate. Cys196 is a binding site for [4Fe-4S] cluster. Positions 224, 225, 226, and 268 each coordinate (2E)-4-hydroxy-3-methylbut-2-enyl diphosphate. The dimethylallyl diphosphate site is built by Ser224, Ser225, Asn226, and Ser268. Ser224, Ser225, Asn226, and Ser268 together coordinate isopentenyl diphosphate.

Belongs to the IspH family. It depends on [4Fe-4S] cluster as a cofactor.

It catalyses the reaction isopentenyl diphosphate + 2 oxidized [2Fe-2S]-[ferredoxin] + H2O = (2E)-4-hydroxy-3-methylbut-2-enyl diphosphate + 2 reduced [2Fe-2S]-[ferredoxin] + 2 H(+). It carries out the reaction dimethylallyl diphosphate + 2 oxidized [2Fe-2S]-[ferredoxin] + H2O = (2E)-4-hydroxy-3-methylbut-2-enyl diphosphate + 2 reduced [2Fe-2S]-[ferredoxin] + 2 H(+). The protein operates within isoprenoid biosynthesis; dimethylallyl diphosphate biosynthesis; dimethylallyl diphosphate from (2E)-4-hydroxy-3-methylbutenyl diphosphate: step 1/1. Its pathway is isoprenoid biosynthesis; isopentenyl diphosphate biosynthesis via DXP pathway; isopentenyl diphosphate from 1-deoxy-D-xylulose 5-phosphate: step 6/6. Its function is as follows. Catalyzes the conversion of 1-hydroxy-2-methyl-2-(E)-butenyl 4-diphosphate (HMBPP) into a mixture of isopentenyl diphosphate (IPP) and dimethylallyl diphosphate (DMAPP). Acts in the terminal step of the DOXP/MEP pathway for isoprenoid precursor biosynthesis. The chain is 4-hydroxy-3-methylbut-2-enyl diphosphate reductase from Vesicomyosocius okutanii subsp. Calyptogena okutanii (strain HA).